Here is a 134-residue protein sequence, read N- to C-terminus: Small ribosomal subunit protein uS8c (134 aa).

It belongs to the universal ribosomal protein uS8 family. In terms of assembly, part of the 30S ribosomal subunit.

The protein resides in the plastid. Its subcellular location is the chloroplast. Its function is as follows. One of the primary rRNA binding proteins, it binds directly to 16S rRNA central domain where it helps coordinate assembly of the platform of the 30S subunit. The protein is Small ribosomal subunit protein uS8c (rps8) of Aethionema grandiflorum (Persian stone-cress).